The following is a 609-amino-acid chain: MVTMENSDEIMQILERFTDLKQKEIPKELEEYLQYVAKTGDTIFKWSSLKYLFREKLLSVIKHFNEDSPRLEEIPNYPNVDPFNYETMKSSLLERLDLFNAAPFTVQRLCELLIDPRKQYSRIDKFMRALEKNILVVSTIDPGRKRTESENGDSLDSVVNGDLSMEVNIDIEMENNNGNADEGSSPGAGSAGCAQKASCPRSDDNDQPKAKKAKLEIDGEERSEASDETDTEVATRVKNEKDEKNDNDETDSPHEAAEIEEPDEEVDEADQETKTTKQPAYGSQKEGEQEESFPSSADDEAEDPMVSKSIEAEKELVAQEKKREEDKKVAIEPKEEIVKKEEVVESDKPDGKVAQLGDKAVVKKSTPPADGENQEPVKVKAENEKEEKKHAPIKTEKQDDIDSTETDDAPSAEKPAEEKIASSESKPKTKSEDDPEAETKKSQPEKTETEAAEKSVSDEKQAAEPNAESENRNDLTTSKATEAAQESVEKSPVEDASSPAVEDLAAATTPQSPLGAADSAAETPPAETGDDSQASPLVAAVTPPVLALNDQPMEDTPAEEEARVSPSATVEEVVMAESANAGAMATEEAAKDDPAAMEIDDTSQEVMMQ.

A Phosphoserine modification is found at S68. The disordered stretch occupies residues 175 to 569 (NNNGNADEGS…EEARVSPSAT (395 aa)). Residues 183 to 194 (GSSPGAGSAGCA) are compositionally biased toward low complexity. A compositionally biased stretch (basic and acidic residues) spans 201–225 (RSDDNDQPKAKKAKLEIDGEERSEA). S223 and S226 each carry phosphoserine. A compositionally biased stretch (basic and acidic residues) spans 233–244 (VATRVKNEKDEK). S252 carries the phosphoserine modification. The span at 258-270 (EIEEPDEEVDEAD) shows a compositional bias: acidic residues. Basic and acidic residues-rich tracts occupy residues 310–351 (IEAE…KPDG) and 375–400 (EPVK…KQDD). Positions 401–410 (IDSTETDDAP) are enriched in acidic residues. Over residues 414–462 (KPAEEKIASSESKPKTKSEDDPEAETKKSQPEKTETEAAEKSVSDEKQA) the composition is skewed to basic and acidic residues. T602 carries the phosphothreonine modification. S603 carries the post-translational modification Phosphoserine.

This sequence belongs to the PPP4R2 family. As to quaternary structure, serine/threonine-protein phosphatase 4 (PP4) occurs in different assemblies of the catalytic and one or more regulatory subunits. Probably part of a PP4 PPP4C-PPP4R2-PPP4R3 complex containing Pp4-19C, PPP4R2r and flfl.

In terms of biological role, regulatory subunit of serine/threonine-protein phosphatase 4 (PP4). The probable PP4 complex Pp4-19C-PPP4R2r-flfl (PPP4C-PPP4R2-PPP4R3) is required to prevent caspase induced cell death (in vitro). The protein is Serine/threonine-protein phosphatase 4 regulatory subunit 2 (PPP4R2r) of Drosophila melanogaster (Fruit fly).